An 818-amino-acid chain; its full sequence is Phosphoenolpyruvate synthase (818 aa).

His-442 (tele-phosphohistidine intermediate) is an active-site residue. Positions 532, 601, 703, 724, 725, 726, and 727 each coordinate substrate. Glu-703 contributes to the Mg(2+) binding site. Residue Asp-727 coordinates Mg(2+). Catalysis depends on Cys-774, which acts as the Proton donor.

Belongs to the PEP-utilizing enzyme family. Requires Mg(2+) as cofactor.

The catalysed reaction is pyruvate + ATP + H2O = phosphoenolpyruvate + AMP + phosphate + 2 H(+). Its pathway is carbohydrate biosynthesis; gluconeogenesis. Catalyzes the phosphorylation of pyruvate to phosphoenolpyruvate. This is Phosphoenolpyruvate synthase (ppsA) from Synechocystis sp. (strain ATCC 27184 / PCC 6803 / Kazusa).